The following is a 402-amino-acid chain: Succinyl-diaminopimelate desuccinylase (402 aa).

Residue H88 coordinates Zn(2+). Residue D90 is part of the active site. D121 contacts Zn(2+). E155 acts as the Proton acceptor in catalysis. The Zn(2+) site is built by E156, E184, and H374.

It belongs to the peptidase M20A family. DapE subfamily. As to quaternary structure, homodimer. The cofactor is Zn(2+). Co(2+) is required as a cofactor.

It carries out the reaction N-succinyl-(2S,6S)-2,6-diaminopimelate + H2O = (2S,6S)-2,6-diaminopimelate + succinate. Its pathway is amino-acid biosynthesis; L-lysine biosynthesis via DAP pathway; LL-2,6-diaminopimelate from (S)-tetrahydrodipicolinate (succinylase route): step 3/3. In terms of biological role, catalyzes the hydrolysis of N-succinyl-L,L-diaminopimelic acid (SDAP), forming succinate and LL-2,6-diaminopimelate (DAP), an intermediate involved in the bacterial biosynthesis of lysine and meso-diaminopimelic acid, an essential component of bacterial cell walls. The protein is Succinyl-diaminopimelate desuccinylase of Psychrobacter sp. (strain PRwf-1).